Here is a 614-residue protein sequence, read N- to C-terminus: MQNCTNSPEDQAASVCPPPPQFPGDDTRPTSKKELAGWYSYGWAAEVFTVCAMGSFLPITLEQMARERGVLLSDKKTPCSATWSSLESTSPSGTWNTIFDATAFTKPGSPRTSQCIIYILGVEINTASFAMYTFSLSVFIQAILIISMSGAADHGSYRKMLLVIFALIGSVSTMLFLAVVPRLYLLGGLFAIISNTCFGASFVLLNSFLPLLVRYHPILMGGHGDGDIPTGTSHDSTSTADGPGQTDGTETTSLLRPEQNRNAYSLGDETQVFASKTSQELKLSTKLSSNGIGIGYIGAVILQAICILVVVETHQTTFSLRLVLFLIGLWWFTFTIPAAMWLRARPGPPLPYGKESGTWTSYMAYAWKSLGRTVMRTRHLRDILLFLAAWFLLSDGIATVSGTAVLFAKTQLGMQPAALGLINVIAMIAGVFGAFSWSFVSRTFNLRASQTIVACIILFELVPLYGLLGFIPAIKSLGYLGLQQPWEMYPLGVIYGLVMGGLSSYCRSFFGELIPPGYEAAFYALYAITDKGSSVFGPAIVGIITDRYGEIRPAFVFLAVLILLPLPLMLLVDVERGKRDALSLSKELKGRPRQEVPVYGAVTHCPSHSENLAE.

Residues 1–29 form a disordered region; sequence MQNCTNSPEDQAASVCPPPPQFPGDDTRP. N-linked (GlcNAc...) asparagine glycosylation is present at N3. Helical transmembrane passes span 41-61, 126-146, 160-180, and 185-205; these read YGWA…PITL, TASF…ILII, MLLV…LAVV, and LLGG…FVLL. The interval 229-254 is disordered; it reads PTGTSHDSTSTADGPGQTDGTETTSL. Over residues 230–254 the composition is skewed to polar residues; the sequence is TGTSHDSTSTADGPGQTDGTETTSL. The next 8 membrane-spanning stretches (helical) occupy residues 291–311, 322–342, 383–403, 417–437, 452–472, 486–506, 523–545, and 554–574; these read GIGI…LVVV, LVLF…AMWL, ILLF…VSGT, AALG…AFSW, IVAC…GFIP, WEMY…SSYC, YALY…GIIT, and AFVF…LVDV.

This sequence belongs to the ATG22 family.

It is found in the vacuole membrane. Vacuolar effluxer which mediate the efflux of amino acids resulting from autophagic degradation. The release of autophagic amino acids allows the maintenance of protein synthesis and viability during nitrogen starvation. This Aspergillus niger (strain ATCC MYA-4892 / CBS 513.88 / FGSC A1513) protein is Autophagy-related protein 22-1 (atg22-1).